Here is a 205-residue protein sequence, read N- to C-terminus: Recombination protein RecR (205 aa).

A C4-type zinc finger spans residues 59–74 (CARCNTFCEGGLCDIC). The region spanning 82–177 (RRLMVVHMPA…KVSRLSQGIP (96 aa)) is the Toprim domain.

The protein belongs to the RecR family.

Functionally, may play a role in DNA repair. It seems to be involved in an RecBC-independent recombinational process of DNA repair. It may act with RecF and RecO. In Neisseria meningitidis serogroup A / serotype 4A (strain DSM 15465 / Z2491), this protein is Recombination protein RecR.